Here is a 514-residue protein sequence, read N- to C-terminus: Cholesterol side-chain cleavage enzyme, mitochondrial (514 aa).

Residues 1–39 (MMVSWSVCRSSLALPACGLPSARHNSSMPVVRQALSPDN) constitute a mitochondrion transit peptide. Residue Cys458 participates in heme binding.

Belongs to the cytochrome P450 family. Requires heme as cofactor. In terms of tissue distribution, in the ovary, not found in early vitellogenic follicles, barely detected in postvitellogenic follicles and abundant in post-ovulatory follicles.

It is found in the mitochondrion inner membrane. The enzyme catalyses 6 reduced [adrenodoxin] + cholesterol + 3 O2 + 6 H(+) = 4-methylpentanal + pregnenolone + 6 oxidized [adrenodoxin] + 4 H2O. It participates in lipid metabolism; C21-steroid hormone metabolism. Its function is as follows. Catalyzes the side-chain cleavage reaction of cholesterol to pregnenolone, the precursor of most steroid hormones. The polypeptide is Cholesterol side-chain cleavage enzyme, mitochondrial (cyp11a1) (Oncorhynchus mykiss (Rainbow trout)).